The chain runs to 93 residues: uncharacterized protein (93 aa).

A helical membrane pass occupies residues 68–88 (WLVTVVLANGVVSLFLLGGLI).

It localises to the membrane. This is an uncharacterized protein from Mycoplasma pneumoniae (strain ATCC 29342 / M129 / Subtype 1) (Mycoplasmoides pneumoniae).